The primary structure comprises 479 residues: GTPase Obg (479 aa).

The region spanning 2–159 (PRFVDRVVIH…RDLTLELKSV (158 aa)) is the Obg domain. The OBG-type G domain occupies 160–341 (ADVGLIGFPS…LIFGLWQMIS (182 aa)). GTP is bound by residues 166-173 (GFPSAGKS), 191-195 (FTTLV), 212-215 (DVPG), 292-295 (NKID), and 322-324 (STV). 2 residues coordinate Mg(2+): Ser-173 and Thr-193. In terms of domain architecture, OCT spans 359 to 437 (PVPVDDSGFT…IGGMTFDWEP (79 aa)). The tract at residues 438–479 (QKPAGHPVAMSGRGTDARLESTDPVGTAERKVARHQRHKHGG) is disordered. Basic residues predominate over residues 469-479 (VARHQRHKHGG).

The protein belongs to the TRAFAC class OBG-HflX-like GTPase superfamily. OBG GTPase family. As to quaternary structure, monomer. Mg(2+) is required as a cofactor.

The protein localises to the cytoplasm. Functionally, an essential GTPase which binds GTP, GDP and possibly (p)ppGpp with moderate affinity, with high nucleotide exchange rates and a fairly low GTP hydrolysis rate. Plays a role in control of the cell cycle, stress response, ribosome biogenesis and in those bacteria that undergo differentiation, in morphogenesis control. This chain is GTPase Obg, found in Mycobacterium leprae (strain Br4923).